Here is a 972-residue protein sequence, read N- to C-terminus: Leucine--tRNA ligase (972 aa).

A 'HIGH' region motif is present at residues 78–89; that stretch reads PYPSGDGLHVGH. Residues 741–745 carry the 'KMSKS' region motif; that stretch reads KIGKS. Lys744 provides a ligand contact to ATP.

The protein belongs to the class-I aminoacyl-tRNA synthetase family.

The protein resides in the cytoplasm. It carries out the reaction tRNA(Leu) + L-leucine + ATP = L-leucyl-tRNA(Leu) + AMP + diphosphate. In Mycobacterium leprae (strain Br4923), this protein is Leucine--tRNA ligase.